The chain runs to 335 residues: Homeobox protein Hox-A1 (335 aa).

A disordered region spans residues 61–80 (IGSPHHHHHHHHRHPQPATY). Basic residues predominate over residues 64–75 (PHHHHHHHHRHP). Positions 75–203 (PQPATYQTSG…PASETSSPAQ (129 aa)) are interaction with OGT. Positions 204-209 (TFDWMK) match the Antp-type hexapeptide motif. Residues 229-288 (PNAVRTNFTTKQLTELEKEFHFNKYLTRARRVEIAASLQLNETQVKIWFQNRRMKQKKRE) constitute a DNA-binding region (homeobox). The segment at 281-335 (RMKQKKREKEGLLPISPATPPGNDEKAEESSEKSSSSPCVPSPGSSTSDTLTTSH) is disordered. The segment covering 303–312 (NDEKAEESSE) has biased composition (basic and acidic residues). Over residues 313 to 328 (KSSSSPCVPSPGSSTS) the composition is skewed to low complexity.

It belongs to the Antp homeobox family. Labial subfamily. As to quaternary structure, interacts with OGT (via TPR repeats domain); the interaction takes place mainly in the nucleus. Forms a DNA-binding heterodimer with transcription factor PBX1.

The protein resides in the nucleus. Its function is as follows. Sequence-specific transcription factor. Regulates multiple developmental processes including brainstem, inner and outer ear, abducens nerve and cardiovascular development and morphogenesis as well as cognition and behavior. Also part of a developmental regulatory system that provides cells with specific positional identities on the anterior-posterior axis. Acts on the anterior body structures. Seems to act in the maintenance and/or generation of hindbrain segments. Activates transcription in the presence of PBX1A and PKNOX1. This chain is Homeobox protein Hox-A1 (HOXA1), found in Homo sapiens (Human).